Reading from the N-terminus, the 442-residue chain is NADH-quinone oxidoreductase subunit D (442 aa).

The protein belongs to the complex I 49 kDa subunit family. In terms of assembly, NDH-1 is composed of 14 different subunits. Subunits NuoB, C, D, E, F, and G constitute the peripheral sector of the complex.

The protein localises to the cell membrane. The catalysed reaction is a quinone + NADH + 5 H(+)(in) = a quinol + NAD(+) + 4 H(+)(out). In terms of biological role, NDH-1 shuttles electrons from NADH, via FMN and iron-sulfur (Fe-S) centers, to quinones in the respiratory chain. The immediate electron acceptor for the enzyme in this species is believed to be a menaquinone. Couples the redox reaction to proton translocation (for every two electrons transferred, four hydrogen ions are translocated across the cytoplasmic membrane), and thus conserves the redox energy in a proton gradient. This chain is NADH-quinone oxidoreductase subunit D, found in Mycolicibacterium smegmatis (strain ATCC 700084 / mc(2)155) (Mycobacterium smegmatis).